The following is a 280-amino-acid chain: 2-dehydro-3-deoxyphosphooctonate aldolase (280 aa).

It belongs to the KdsA family.

It is found in the cytoplasm. The catalysed reaction is D-arabinose 5-phosphate + phosphoenolpyruvate + H2O = 3-deoxy-alpha-D-manno-2-octulosonate-8-phosphate + phosphate. It participates in carbohydrate biosynthesis; 3-deoxy-D-manno-octulosonate biosynthesis; 3-deoxy-D-manno-octulosonate from D-ribulose 5-phosphate: step 2/3. Its pathway is bacterial outer membrane biogenesis; lipopolysaccharide biosynthesis. This is 2-dehydro-3-deoxyphosphooctonate aldolase from Neisseria meningitidis serogroup A / serotype 4A (strain DSM 15465 / Z2491).